An 849-amino-acid polypeptide reads, in one-letter code: Autoinducer 1 sensor kinase/phosphatase LuxN (849 aa).

The next 7 membrane-spanning stretches (helical) occupy residues 9 to 29 (IVYA…MWLF), 41 to 61 (VIFG…IAWI), 160 to 180 (SYFF…LVAM), 196 to 216 (IAGI…MTYF), 220 to 242 (FSLT…YALL), 251 to 275 (YIAY…AIFI), and 283 to 301 (WLIA…QLLY). Positions 468–683 (SIAHEMRNPL…EFHLYFPVVP (216 aa)) constitute a Histidine kinase domain. Position 471 is a phosphohistidine; by autocatalysis (His-471). The Response regulatory domain occupies 722–835 (TVLIVDDKEV…ALRHVLGNWL (114 aa)). A 4-aspartylphosphate modification is found at Asp-771.

It is found in the cell inner membrane. It catalyses the reaction ATP + protein L-histidine = ADP + protein N-phospho-L-histidine.. Its activity is regulated as follows. The phosphatase activity is constitutive and the kinase activity is regulated by the presence or absence of AI-1. At low cell density the kinase activity overrides the phosphatase activity. Functionally, at low cell density, in the absence of AI-1 (autoinducer 1), LuxN has a kinase activity and autophosphorylates on His-471. The phosphoryl group is then transferred on Asp-771 of the response regulator domain. The phosphoryl group is transferred to LuxU, and ultimately to LuxO. At high cell density, in the presence of AI-1, the kinase activity is inactivated, and the response regulator domain has a phosphatase activity. LuxN phosphatase acts on itself. As LuxU could function to establish an equilibrium between the aspartyl-phosphate of LuxN and the aspartyl-phosphate of LuxO, LuxU transfers phosphate from LuxO to LuxN and finally phosphate is drained from the system. This Vibrio campbellii (strain ATCC BAA-1116) protein is Autoinducer 1 sensor kinase/phosphatase LuxN (luxN).